The sequence spans 344 residues: Nuclear distribution protein nudE-like 1-B (344 aa).

Residues Lys-13–Gly-190 adopt a coiled-coil conformation. Disordered regions lie at residues Arg-186–Ser-209 and Pro-325–Val-344. Pro residues predominate over residues Pro-333 to Val-344.

It belongs to the nudE family. Post-translationally, phosphorylated in mitosis.

The protein resides in the cytoplasm. The protein localises to the cytoskeleton. It localises to the microtubule organizing center. It is found in the centrosome. Its subcellular location is the spindle. Required for organization of the cellular microtubule array and microtubule anchoring at the centrosome. Positively regulates the activity of the minus-end directed microtubule motor protein dynein. May enhance dynein-mediated microtubule sliding by targeting dynein to the microtubule plus end. Positively regulates lysosome peripheral distribution and ruffled border formation in osteoclasts. The protein is Nuclear distribution protein nudE-like 1-B (ndel1-b) of Xenopus laevis (African clawed frog).